Reading from the N-terminus, the 43-residue chain is Protein PsbN (43 aa).

Residues 5–27 (TLVAISISCLLVSFTGYALYTAF) traverse the membrane as a helical segment.

The protein belongs to the PsbN family.

The protein localises to the plastid. It localises to the chloroplast thylakoid membrane. In terms of biological role, may play a role in photosystem I and II biogenesis. In Cedrus deodara (Deodar cedar), this protein is Protein PsbN.